A 617-amino-acid chain; its full sequence is Na(+)/H(+) antiporter NhaA 1 (617 aa).

Residues 1 to 26 (MTVTEPATQRGFPLLPSRLSRGSKAT) form a disordered region. The segment at 1–433 (MTVTEPATQR…GWAIFRITDW (433 aa)) is na(+)/H(+) antiporter NhaA. 11 helical membrane passes run 33–53 (AAAL…SPWA), 75–95 (MTVK…IVGL), 113–133 (AVPV…FLAF), 141–161 (HAWG…LAII), 171–191 (LFLL…IAVL), 198–218 (VAPL…RYLP), 234–254 (IALY…ALLI), 304–324 (VSPV…AGVL), 341–361 (GIVA…TWLI), 378–398 (IAGG…IVDI), and 411–431 (IGVL…FRIT). The region spanning 434 to 617 (LSPPEPVGLK…LIRALEAGRG (184 aa)) is the Thioredoxin domain.

This sequence in the N-terminal section; belongs to the NhaA Na(+)/H(+) (TC 2.A.33) antiporter family.

The protein localises to the cell membrane. The catalysed reaction is Na(+)(in) + 2 H(+)(out) = Na(+)(out) + 2 H(+)(in). Na(+)/H(+) antiporter that extrudes sodium in exchange for external protons. The chain is Na(+)/H(+) antiporter NhaA 1 from Mycolicibacterium gilvum (strain PYR-GCK) (Mycobacterium gilvum (strain PYR-GCK)).